The sequence spans 607 residues: MDTKIGSIDDCKPTNGDVCSPTNGTVATIHNSVPSSAITINYCDATLGRHLARRLVQAGVTDVFSVPGDFNLTLLDHLMAEPDLNLIGCCNELNAGYAADGYARSRGVGACVVTFTVGGLSVLNAIAGAYSENLPLICIVGGPNSNDYGTNRILHHTIGLPDFSQELRCFQTVTCYQAVVNNLDDAHEQIDKAISTALKESKPVYISVSCNLAAIPHHTFSRDPVPFSLAPRLSNKMGLEAAVEATLEFLNKAVKPVMVGGPKLRVAKACDAFVELADASGYALAMMPSAKGFVPEHHPHFIGTYWGAVSTPFCSEIVESADAYIFAGPIFNDYSSVGYSLLLKKEKAIVVQPDRITVANGPTFGCILMSDFFRELSKRVKRNETAYENYHRIFVPEGKPLKCESREPLRVNTMFQHIQKMLSSETAVIAETGDSWFNCQKLKLPKGCGYEFQMQYGSIGWSVGATLGYAQASPEKRVLAFIGDGSFQVTVQDISTMLRNGQKTIIFLINNGGYTIEVEIHDGPYNVIKNWNYTGLVDAIHNGEGNCWTAKVRYEEELVEAITTATTEKKDCLCFIEVILHKDDTSKELLEWGSRVSAANSRPPNPQ.

Positions 69 and 156 each coordinate substrate. A thiamine pyrophosphate binding region spans residues Asp-434–Ile-516. Mg(2+) contacts are provided by Asp-484, Asn-511, and Gly-513. A substrate-binding site is contributed by Glu-517.

The protein belongs to the TPP enzyme family. Homotetramer. A metal cation serves as cofactor. The cofactor is thiamine diphosphate. In terms of tissue distribution, highly expressed in seeds, and at lower levels in roots and siliques.

The catalysed reaction is a 2-oxocarboxylate + H(+) = an aldehyde + CO2. In terms of biological role, may play a role in ethanolic fermentation during anoxia. This is Pyruvate decarboxylase 1 (PDC1) from Arabidopsis thaliana (Mouse-ear cress).